An 87-amino-acid polypeptide reads, in one-letter code: Cell division topological specificity factor (87 aa).

The protein belongs to the MinE family.

Its function is as follows. Prevents the cell division inhibition by proteins MinC and MinD at internal division sites while permitting inhibition at polar sites. This ensures cell division at the proper site by restricting the formation of a division septum at the midpoint of the long axis of the cell. The sequence is that of Cell division topological specificity factor from Chelativorans sp. (strain BNC1).